We begin with the raw amino-acid sequence, 305 residues long: Chromatin modification-related protein png2 (305 aa).

Residues 135–239 form a disordered region; the sequence is TVTPQTSERR…PLVKHDTLDS (105 aa). Positions 153–167 are enriched in low complexity; the sequence is NQHSQQYSSQERSSS. Polar residues-rich tracts occupy residues 168 to 183 and 195 to 210; these read YNNF…SYHT and KSSS…APQS. Tyr181 carries the post-translational modification Phosphotyrosine. Phosphothreonine is present on Thr183. A phosphoserine mark is found at Ser197 and Ser198. Over residues 211–223 the composition is skewed to basic and acidic residues; it reads TERRPVRRSESRL. Residues 248 to 297 form a PHD-type zinc finger; it reads QLYCYCQQVSYGQMIGCDNENCKREWFHLPCVGLVEPPKGIWYCKECEEL. Positions 251, 253, 264, 269, 275, 278, 291, and 294 each coordinate Zn(2+).

It belongs to the ING family. Interacts with H3K4me3 and to a lesser extent with H3K4me2. Component of the clr6 histone deacetylase complex I'composed of at least clr6, png2, prw1, pst1 and sds3.

It is found in the cytoplasm. The protein resides in the nucleus. In terms of biological role, component of the clr6 histone deacetylase complex I' responsible for the deacetylation of lysine residues on the N-terminal part of the core histones (H2A, H2B, H3 and H4). Histone deacetylation gives a tag for epigenetic repression and plays an important role in transcriptional regulation, cell cycle progression and developmental events. Has a role in silencing of mating type genes. The protein is Chromatin modification-related protein png2 (png2) of Schizosaccharomyces pombe (strain 972 / ATCC 24843) (Fission yeast).